A 729-amino-acid polypeptide reads, in one-letter code: MATVSTGSLIFIVKKNSPMMSKLVFFWQNREKEFRDFGGFSEKSVYFCDTIDNRKRLILVVINREVLLMTFDAIDQLAVNTVRTLSMDAIQAANSGHPGLPMGAAPMAYVLWNHFMNINPKTSRNWSNRDRFILSAGHGSAMLYSLLHLAGYDLSVEDLKNFRQWGSKTPGHPEVNHTDGVEATTGPLGQGIANAVGMAMAEAHLAAKFNKPGFDIVDHYTFALNGDGDLMEGVSQEAASMAGHLKLGKLVLLYDSNDISLDGPTSMAFTEDVKGRFEAYGWQHILVKDGNDLEEIAAAIEAAKAETEKPTIIEVKTIIGFGAEKQGTSAVHGAPLGAEGIAFAKKAYQWTHQDFEVPAEVTERFAQGLQARGEKAEQAWNDLFAAYEAEYPELAAEYQKAFANEAAQVELEAHELGSSMASRVSSQQAIQQISEQVASFWGGSADLSASNNTMVKAETDFQPGHYEGRNVWFGVREFAMAAAMNGIALHGGTRVYGGTFFVFSNYLLPAVRMAALQNLPTVYVMTHDSIAVGEDGPTHEPIEQLASVRSMPNLNVIRPADGNETNAAWKRAIAETDRPTMLVLTRQNLPVLEGTKELAEDGLNKGAYILSEAKGDLEGILIATGSEVKLAMDTQEALEAEGIHVRVVSMPSQNIFDEQSAEYKESILPAAVTKRLAIEAGSSFGWAKYVGLAGKTLTIDTWGASAPGNRIFEEYGFTVANATELYKSL.

His97 contributes to the substrate binding site. Thiamine diphosphate-binding positions include His138 and 186-188 (GPL). Asp227 serves as a coordination point for Mg(2+). 2 residues coordinate thiamine diphosphate: Gly228 and Asn257. Mg(2+) contacts are provided by Asn257 and Ile259. His332, Arg423, and Ser450 together coordinate substrate. His332 contributes to the thiamine diphosphate binding site. The Proton donor role is filled by Glu477. Phe503 provides a ligand contact to thiamine diphosphate. Substrate-binding residues include His527, Asp535, and Arg586.

It belongs to the transketolase family. As to quaternary structure, homodimer. Mg(2+) is required as a cofactor. The cofactor is Ca(2+). Mn(2+) serves as cofactor. It depends on Co(2+) as a cofactor. Requires thiamine diphosphate as cofactor.

The catalysed reaction is D-sedoheptulose 7-phosphate + D-glyceraldehyde 3-phosphate = aldehydo-D-ribose 5-phosphate + D-xylulose 5-phosphate. Functionally, catalyzes the transfer of a two-carbon ketol group from a ketose donor to an aldose acceptor, via a covalent intermediate with the cofactor thiamine pyrophosphate. The polypeptide is Transketolase (Streptococcus pyogenes serotype M6 (strain ATCC BAA-946 / MGAS10394)).